A 964-amino-acid chain; its full sequence is Chaperone protein ClpB4, mitochondrial (964 aa).

The transit peptide at 1–39 (MALRRLSKSVSSAIKAQYTLSRPSPLLRSRSLSSSPHYT) directs the protein to the mitochondrion. The Clp R domain occupies 83 to 227 (VNQNEFTEMA…KDAIKDVRGD (145 aa)). Repeat stretches follow at residues 88-153 (FTEM…ISKQ) and 164-227 (LGSS…VRGD). The segment at 242–490 (LEKYGNDLTE…KLKMEITSKP (249 aa)) is i. Residues 287–294 (GEPGVGKT) and 690–697 (GPTGVGKT) contribute to the ATP site. The segment at 616–807 (VTDLDIAEIV…VVIMTSNIGS (192 aa)) is II.

The protein belongs to the ClpA/ClpB family.

Its subcellular location is the mitochondrion. Functionally, molecular chaperone that does not seem to be involved in heat stress response or tolerance. This Arabidopsis thaliana (Mouse-ear cress) protein is Chaperone protein ClpB4, mitochondrial (CLPB4).